Consider the following 296-residue polypeptide: Cytidine deaminase (296 aa).

CMP/dCMP-type deaminase domains lie at 47 to 167 (ELNE…FGPS) and 186 to 296 (DSND…VEPE). 88–90 (NIE) provides a ligand contact to substrate. Residue His-101 coordinates Zn(2+). Glu-103 acts as the Proton donor in catalysis. Zn(2+)-binding residues include Cys-128 and Cys-131.

Belongs to the cytidine and deoxycytidylate deaminase family. In terms of assembly, homodimer. It depends on Zn(2+) as a cofactor.

The catalysed reaction is cytidine + H2O + H(+) = uridine + NH4(+). It catalyses the reaction 2'-deoxycytidine + H2O + H(+) = 2'-deoxyuridine + NH4(+). Functionally, this enzyme scavenges exogenous and endogenous cytidine and 2'-deoxycytidine for UMP synthesis. This is Cytidine deaminase from Shewanella pealeana (strain ATCC 700345 / ANG-SQ1).